A 348-amino-acid chain; its full sequence is Neuronal growth regulator 1 (348 aa).

An N-terminal signal peptide occupies residues 1-31; the sequence is MVLLAQGACCSNQWLAAVLLSLCSCLPAGQS. Ig-like C2-type domains are found at residues 32-128, 133-215, and 219-307; these read VDFP…VHLT, PKIY…RVIV, and PTIQ…LPLN. Cysteine 54 and cysteine 112 are oxidised to a cystine. Asparagine 67 and asparagine 149 each carry an N-linked (GlcNAc...) asparagine glycan. 2 cysteine pairs are disulfide-bonded: cysteine 154-cysteine 197 and cysteine 239-cysteine 291. Phosphotyrosine is present on tyrosine 181. N-linked (GlcNAc...) asparagine glycans are attached at residues asparagine 269, asparagine 280, asparagine 288, and asparagine 301. Glycine 318 carries the GPI-anchor amidated glycine lipid modification. Residues 319–348 constitute a propeptide, removed in mature form; sequence SACDLFSCWSLALTLSSVISIFYLKNAILQ.

It belongs to the immunoglobulin superfamily. IgLON family. In terms of tissue distribution, expressed in brain.

The protein resides in the cell membrane. In terms of biological role, may be involved in cell-adhesion. May function as a trans-neural growth-promoting factor in regenerative axon sprouting in the mammalian brain. This Mus musculus (Mouse) protein is Neuronal growth regulator 1 (Negr1).